A 344-amino-acid polypeptide reads, in one-letter code: GTPase Obg (344 aa).

Positions 1-12 are enriched in polar residues; it reads MFVDSASFSVSS. A disordered region spans residues 1–36; that stretch reads MFVDSASFSVSSGKGGPGCASFRREKHVPLGGPDGG. Residues 1 to 158 enclose the Obg domain; it reads MFVDSASFSV…RNIRLELKLI (158 aa). Positions 159–341 constitute an OBG-type G domain; it reads ADVGLVGFPN…LKFGLLEILK (183 aa). Residues 165-172, 190-194, 212-215, 280-283, and 322-324 each bind GTP; these read GFPNVGKS, FTTLT, DIPG, TRLD, and SSV. Residues serine 172 and threonine 192 each coordinate Mg(2+).

The protein belongs to the TRAFAC class OBG-HflX-like GTPase superfamily. OBG GTPase family. In terms of assembly, monomer. Mg(2+) is required as a cofactor.

It is found in the cytoplasm. Functionally, an essential GTPase which binds GTP, GDP and possibly (p)ppGpp with moderate affinity, with high nucleotide exchange rates and a fairly low GTP hydrolysis rate. Plays a role in control of the cell cycle, stress response, ribosome biogenesis and in those bacteria that undergo differentiation, in morphogenesis control. In Campylobacter fetus subsp. fetus (strain 82-40), this protein is GTPase Obg.